The following is a 284-amino-acid chain: Tropomyosin Pen a 1.0102 (284 aa).

Positions 1–51 are disordered; sequence MDAIKKKMQAMKLEKDNAMDRADTLEQQNKEANNRAEKSEEEVHNLQKRMQ. Residues 1-273 are a coiled coil; sequence MDAIKKKMQA…KEKYKSITDE (273 aa). The segment covering 12-45 has biased composition (basic and acidic residues); the sequence is KLEKDNAMDRADTLEQQNKEANNRAEKSEEEVHN. IgE-binding regions lie at residues 43–57, 85–105, 133–153, 187–202, 247–284, 249–260, and 266–281; these read VHNL…ENDL, VAAL…SEER, RSLS…EARF, ESKI…VVGN, QKLQ…LSGY, LQKEVDRLEDEL, and KYKS…FSEL.

This sequence belongs to the tropomyosin family. As to quaternary structure, homodimer.

Tropomyosin, in association with the troponin complex, plays a central role in the calcium dependent regulation of muscle contraction. The chain is Tropomyosin Pen a 1.0102 from Penaeus aztecus (Brown shrimp).